A 366-amino-acid chain; its full sequence is Tubulin-like protein CetZ (366 aa).

Residues 10–14 (QCGTK), 103–105 (GTG), Glu-136, Asn-163, and Asn-181 contribute to the GTP site.

Belongs to the CetZ family.

Its subcellular location is the cytoplasm. Functionally, involved in cell shape control. This is Tubulin-like protein CetZ from Pyrococcus furiosus (strain ATCC 43587 / DSM 3638 / JCM 8422 / Vc1).